Consider the following 94-residue polypeptide: Large ribosomal subunit protein bL25 (94 aa).

This sequence belongs to the bacterial ribosomal protein bL25 family. As to quaternary structure, part of the 50S ribosomal subunit; part of the 5S rRNA/L5/L18/L25 subcomplex. Contacts the 5S rRNA. Binds to the 5S rRNA independently of L5 and L18.

This is one of the proteins that binds to the 5S RNA in the ribosome where it forms part of the central protuberance. The sequence is that of Large ribosomal subunit protein bL25 from Salmonella arizonae (strain ATCC BAA-731 / CDC346-86 / RSK2980).